A 227-amino-acid polypeptide reads, in one-letter code: Cytochrome c oxidase subunit 2 (227 aa).

Over 1-14 (MAYPHQLGFQDATS) the chain is Mitochondrial intermembrane. The helical transmembrane segment at 15–45 (PIMEELLSFHDHTLMIVFLISSLVLYLISLM) threads the bilayer. The Mitochondrial matrix segment spans residues 46-59 (LTTKLTHTSTMDAQ). A helical transmembrane segment spans residues 60–87 (EVETVWTILPAIILIMIALPSLRILYMM). Residues 88–227 (DEINNPLLTV…SFENWTTSMT (140 aa)) lie on the Mitochondrial intermembrane side of the membrane. Cu cation-binding residues include His-161, Cys-196, Glu-198, Cys-200, His-204, and Met-207. Glu-198 contributes to the Mg(2+) binding site.

Belongs to the cytochrome c oxidase subunit 2 family. As to quaternary structure, component of the cytochrome c oxidase (complex IV, CIV), a multisubunit enzyme composed of 14 subunits. The complex is composed of a catalytic core of 3 subunits MT-CO1, MT-CO2 and MT-CO3, encoded in the mitochondrial DNA, and 11 supernumerary subunits COX4I, COX5A, COX5B, COX6A, COX6B, COX6C, COX7A, COX7B, COX7C, COX8 and NDUFA4, which are encoded in the nuclear genome. The complex exists as a monomer or a dimer and forms supercomplexes (SCs) in the inner mitochondrial membrane with NADH-ubiquinone oxidoreductase (complex I, CI) and ubiquinol-cytochrome c oxidoreductase (cytochrome b-c1 complex, complex III, CIII), resulting in different assemblies (supercomplex SCI(1)III(2)IV(1) and megacomplex MCI(2)III(2)IV(2)). Found in a complex with TMEM177, COA6, COX18, COX20, SCO1 and SCO2. Interacts with TMEM177 in a COX20-dependent manner. Interacts with COX20. Interacts with COX16. Requires Cu cation as cofactor.

The protein resides in the mitochondrion inner membrane. The catalysed reaction is 4 Fe(II)-[cytochrome c] + O2 + 8 H(+)(in) = 4 Fe(III)-[cytochrome c] + 2 H2O + 4 H(+)(out). In terms of biological role, component of the cytochrome c oxidase, the last enzyme in the mitochondrial electron transport chain which drives oxidative phosphorylation. The respiratory chain contains 3 multisubunit complexes succinate dehydrogenase (complex II, CII), ubiquinol-cytochrome c oxidoreductase (cytochrome b-c1 complex, complex III, CIII) and cytochrome c oxidase (complex IV, CIV), that cooperate to transfer electrons derived from NADH and succinate to molecular oxygen, creating an electrochemical gradient over the inner membrane that drives transmembrane transport and the ATP synthase. Cytochrome c oxidase is the component of the respiratory chain that catalyzes the reduction of oxygen to water. Electrons originating from reduced cytochrome c in the intermembrane space (IMS) are transferred via the dinuclear copper A center (CU(A)) of subunit 2 and heme A of subunit 1 to the active site in subunit 1, a binuclear center (BNC) formed by heme A3 and copper B (CU(B)). The BNC reduces molecular oxygen to 2 water molecules using 4 electrons from cytochrome c in the IMS and 4 protons from the mitochondrial matrix. The polypeptide is Cytochrome c oxidase subunit 2 (MT-CO2) (Georychus capensis (Cape mole rat)).